The chain runs to 299 residues: ATP phosphoribosyltransferase (299 aa).

This sequence belongs to the ATP phosphoribosyltransferase family. Long subfamily. Mg(2+) is required as a cofactor.

It is found in the cytoplasm. The enzyme catalyses 1-(5-phospho-beta-D-ribosyl)-ATP + diphosphate = 5-phospho-alpha-D-ribose 1-diphosphate + ATP. Its pathway is amino-acid biosynthesis; L-histidine biosynthesis; L-histidine from 5-phospho-alpha-D-ribose 1-diphosphate: step 1/9. Feedback inhibited by histidine. Its function is as follows. Catalyzes the condensation of ATP and 5-phosphoribose 1-diphosphate to form N'-(5'-phosphoribosyl)-ATP (PR-ATP). Has a crucial role in the pathway because the rate of histidine biosynthesis seems to be controlled primarily by regulation of HisG enzymatic activity. The chain is ATP phosphoribosyltransferase from Shewanella pealeana (strain ATCC 700345 / ANG-SQ1).